A 584-amino-acid chain; its full sequence is Cytochrome c oxidase subunit 1 (584 aa).

The tract at residues 1-25 (MTAVAPRVDGHVAPQRPEPTGHARK) is disordered. The helical transmembrane segment at 43–63 (IMYIIMSFSFFFLGGLMALLI) threads the bilayer. Residue histidine 87 coordinates Fe(II)-heme a. 6 helical membrane passes run 90–110 (VMLLLYGTPIVWGFANYVLPL), 122–142 (LNAFGFWITTVGGVAMLTGFL), 171–191 (MWIVGVGATGIGSVASAINML), 214–234 (IFVVSVLALLIFPLLLAAALG), 259–279 (LFWFFGHPEVYVLALPFFGIV), and 292–312 (FGYVGLIFATLSIGALSMAVW). Residues histidine 265 and tyrosine 269 each contribute to the Cu cation site. The segment at residues 265 to 269 (HPEVY) is a cross-link (1'-histidyl-3'-tyrosine (His-Tyr)). 2 residues coordinate Cu cation: histidine 314 and histidine 315. 2 consecutive transmembrane segments (helical) span residues 316 to 336 (MFVTGAVLLPFFSFMTFLISV) and 360 to 380 (MIWSVGFMATFLFGGLTGIML). Histidine 398 is a binding site for heme a3. A run of 3 helical transmembrane segments spans residues 399–419 (FHYTLFGTVVFASCAGVYFWF), 434–454 (IHFWLTFVGFHGTFLIQHWVG), and 477–497 (ISTVFSFLLGLSVIPFIWNVF). Histidine 400 serves as a coordination point for Fe(II)-heme a. A disordered region spans residues 564–584 (HDDINAPELGTAPALASDSSR).

Associates with subunits II, III and IV to form cytochrome c oxidase. The 4 subunit cytochrome c oxidase forms a supercomplex with the menaquinol-cytochrome c reductase complex (cytochrome bc1). Cu(2+) serves as cofactor. It depends on heme as a cofactor.

It is found in the cell membrane. It carries out the reaction 4 Fe(II)-[cytochrome c] + O2 + 8 H(+)(in) = 4 Fe(III)-[cytochrome c] + 2 H2O + 4 H(+)(out). Its pathway is energy metabolism; oxidative phosphorylation. Cytochrome c oxidase is the component of the respiratory chain that catalyzes the reduction of oxygen to water. Subunits 1-3 form the functional core of the enzyme complex. CO I is the catalytic subunit of the enzyme. Electrons originating in cytochrome c are transferred via the copper A center of subunit 2 and heme A of subunit 1 to the bimetallic center formed by heme A3 and copper B. The protein is Cytochrome c oxidase subunit 1 (ctaD) of Corynebacterium glutamicum (strain ATCC 13032 / DSM 20300 / JCM 1318 / BCRC 11384 / CCUG 27702 / LMG 3730 / NBRC 12168 / NCIMB 10025 / NRRL B-2784 / 534).